The sequence spans 284 residues: Diaminopimelate epimerase (284 aa).

Substrate-binding residues include asparagine 20, glutamine 53, and asparagine 73. The active-site Proton donor is cysteine 82. Residues 83 to 84, asparagine 167, asparagine 200, and 218 to 219 contribute to the substrate site; these read GN and ER. The Proton acceptor role is filled by cysteine 227. Residue 228-229 participates in substrate binding; it reads GS.

Belongs to the diaminopimelate epimerase family. Homodimer.

It is found in the cytoplasm. The enzyme catalyses (2S,6S)-2,6-diaminopimelate = meso-2,6-diaminopimelate. The protein operates within amino-acid biosynthesis; L-lysine biosynthesis via DAP pathway; DL-2,6-diaminopimelate from LL-2,6-diaminopimelate: step 1/1. Functionally, catalyzes the stereoinversion of LL-2,6-diaminopimelate (L,L-DAP) to meso-diaminopimelate (meso-DAP), a precursor of L-lysine and an essential component of the bacterial peptidoglycan. The protein is Diaminopimelate epimerase of Xanthomonas oryzae pv. oryzae (strain MAFF 311018).